A 192-amino-acid chain; its full sequence is Phosphomevalonate kinase (192 aa).

ATP is bound by residues 17–23 and Arg141; that span reads KRKSGKD. Asn170 lines the substrate pocket. ATP contacts are provided by His171 and Gln180.

In terms of assembly, monomer.

It localises to the cytoplasm. It is found in the cytosol. The catalysed reaction is (R)-5-phosphomevalonate + ATP = (R)-5-diphosphomevalonate + ADP. The protein operates within isoprenoid biosynthesis; isopentenyl diphosphate biosynthesis via mevalonate pathway; isopentenyl diphosphate from (R)-mevalonate: step 2/3. Catalyzes the reversible ATP-dependent phosphorylation of mevalonate 5-phosphate to produce mevalonate diphosphate and ADP, a key step in the mevalonic acid mediated biosynthesis of isopentenyl diphosphate and other polyisoprenoid metabolites. This is Phosphomevalonate kinase (Pmvk) from Mus musculus (Mouse).